A 183-amino-acid polypeptide reads, in one-letter code: Archaemetzincin (183 aa).

Position 131 (His131) interacts with Zn(2+). Glu132 (proton acceptor) is an active-site residue. Zn(2+)-binding residues include His135, His141, Cys142, Cys147, Cys166, and Cys169.

The protein belongs to the peptidase M54 family. Monomer. Zn(2+) serves as cofactor.

Probable zinc metalloprotease whose natural substrate is unknown. The sequence is that of Archaemetzincin from Saccharolobus islandicus (strain Y.N.15.51 / Yellowstone #2) (Sulfolobus islandicus).